The primary structure comprises 179 residues: Cell division protein SepF (179 aa).

Positions 22-55 (LPYEKRDEPVFTSVNSSQEPALPMNQPSQSAGTK) are disordered. The segment covering 33-55 (TSVNSSQEPALPMNQPSQSAGTK) has biased composition (polar residues).

Belongs to the SepF family. In terms of assembly, homodimer. Interacts with FtsZ.

Its subcellular location is the cytoplasm. Functionally, cell division protein that is part of the divisome complex and is recruited early to the Z-ring. Probably stimulates Z-ring formation, perhaps through the cross-linking of FtsZ protofilaments. Its function overlaps with FtsA. This chain is Cell division protein SepF, found in Streptococcus pneumoniae (strain Taiwan19F-14).